The following is a 195-amino-acid chain: Fe/S biogenesis protein NfuA (195 aa).

[4Fe-4S] cluster is bound by residues Cys152 and Cys155.

The protein belongs to the NfuA family. Homodimer. Requires [4Fe-4S] cluster as cofactor.

In terms of biological role, involved in iron-sulfur cluster biogenesis. Binds a 4Fe-4S cluster, can transfer this cluster to apoproteins, and thereby intervenes in the maturation of Fe/S proteins. Could also act as a scaffold/chaperone for damaged Fe/S proteins. This chain is Fe/S biogenesis protein NfuA, found in Vibrio cholerae serotype O1 (strain ATCC 39315 / El Tor Inaba N16961).